A 255-amino-acid polypeptide reads, in one-letter code: Short chain dehydrogenase adrF (255 aa).

NADP(+) is bound by residues Ile-11, Arg-118, Tyr-150, Lys-154, and Val-183. The active-site Proton acceptor is the Tyr-150. The active-site Lowers pKa of active site Tyr is the Lys-154.

It belongs to the short-chain dehydrogenases/reductases (SDR) family.

The protein operates within secondary metabolite biosynthesis; terpenoid biosynthesis. Its function is as follows. Short chain dehydrogenase; part of the gene cluster that mediates the biosynthesis of andrastins, meroterpenoid compounds that exhibit inhibitory activity against ras farnesyltransferase, suggesting that they could be promising leads for antitumor agents. The first step of the pathway is the synthesis of 3,5-dimethylorsellinic acid (DMOA) by the polyketide synthase adrD via condensation of one acetyl-CoA starter unit with 3 malonyl-CoA units and 2 methylations. DMAO is then converted to farnesyl-DMAO by the prenyltransferase adrG. The methyltransferase adrK catalyzes the methylation of the carboxyl group of farnesyl-DMAO to farnesyl-DMAO methyl ester which is further converted to epoxyfarnesyl-DMAO methyl ester by the FAD-dependent monooxygenase adrH. The terpene cyclase adrI then catalyzes the carbon skeletal rearrangement to generate the andrastin E, the first compound in the pathway having the andrastin scaffold, with the tetracyclic ring system. The post-cyclization tailoring enzymes adrF, adrE, adrJ, and adrA, are involved in the conversion of andrastin E into andrastin A. The short chain dehydrogenase adrF is responsible for the oxidation of the C-3 a hydroxyl group of andrastin E to yield the corresponding ketone, andrastin D. The ketoreductase adrE stereoselectively reduces the carbonyl moiety to reverse the stereochemistry of the C-3 position to yield andrastin F. The acetyltransferase adrJ is the acetyltransferase that attaches the acetyl group to the C-3 hydroxyl group of andrastin F to yield andrastin C. Finally, the cytochrome P450 monooxygenase adrA catalyzes two sequential oxidation reactions of the C-23 methyl group, to generate the corresponding alcohol andrastin B, and aldehyde andrastin A. This chain is Short chain dehydrogenase adrF, found in Penicillium rubens (strain ATCC 28089 / DSM 1075 / NRRL 1951 / Wisconsin 54-1255) (Penicillium chrysogenum).